Here is a 105-residue protein sequence, read N- to C-terminus: TMEM14 protein homolog YJR085C (105 aa).

3 consecutive transmembrane segments (helical) span residues 26–46, 53–73, and 77–97; these read IPSL…GYLL, GLEM…IRGM, and FTKP…YYYY.

The protein belongs to the TMEM14 family.

The protein localises to the mitochondrion. It is found in the membrane. The chain is TMEM14 protein homolog YJR085C from Saccharomyces cerevisiae (strain ATCC 204508 / S288c) (Baker's yeast).